The chain runs to 70 residues: UPF0337 protein BT9727_3385 (70 aa).

The protein belongs to the UPF0337 (CsbD) family.

This is UPF0337 protein BT9727_3385 from Bacillus thuringiensis subsp. konkukian (strain 97-27).